A 73-amino-acid chain; its full sequence is Dermaseptin-H4 (73 aa).

A signal peptide spans 1–22; the sequence is MAFMKKSLFLVLFLGMVSLSIC. A propeptide spanning residues 23–43 is cleaved from the precursor; the sequence is EEEKRENEDEAKQEDDEQSEM. A disordered region spans residues 25–45; that stretch reads EKRENEDEAKQEDDEQSEMKR. A compositionally biased stretch (acidic residues) spans 30 to 40; the sequence is EDEAKQEDDEQ. Position 70 is a leucine amide (L70). Positions 72–73 are excised as a propeptide; that stretch reads EQ.

Expressed by the skin glands.

Its subcellular location is the secreted. Its function is as follows. Has antibacterial activity against the Gram-negative bacteria E.coli ATCC 11775 (MIC=0.8 uM), and the Gram-positive bacteria S.aureus ATCC 12600 (MIC=0.4 uM) and M.luteus ATCC 49732 (MIC=0.8 uM). Does not inhibit the growth of the fungus C.albicans. Probably acts by disturbing membrane functions with its amphipathic structure. The polypeptide is Dermaseptin-H4 (Pithecopus azureus (Orange-legged monkey tree frog)).